A 732-amino-acid polypeptide reads, in one-letter code: Myosin heavy chain kinase B (732 aa).

In terms of domain architecture, Alpha-type protein kinase spans 124 to 328; sequence DPYTTTAQWT…ICQYLNLQSI (205 aa). 298 to 303 is an ATP binding site; that stretch reads GIGNLG. Residues 331–428 form a disordered region; the sequence is KSEKSDCGTV…TNKERSKSKS (98 aa). Residues 356-394 show a composition bias toward low complexity; sequence NNNNNNNNNNNNNNNNNNSNNNNNNNSSISKSLVEISSG. Basic and acidic residues predominate over residues 395-404; it reads SKERNDRDSP. Residues 405-419 show a composition bias toward polar residues; it reads SRQLFVSNDGNTLNT. 7 WD repeats span residues 458–486, 500–528, 540–568, 580–608, 620–648, 660–688, and 700–730; these read KGYH…RVYD, GHEG…KVWD, GHDK…KVWD, SHAR…KVWD, GHTK…RVWN, GHDR…KIWD, and GHNA…RVWG.

The protein belongs to the protein kinase superfamily. Alpha-type protein kinase family. ALPK subfamily.

It carries out the reaction L-threonyl-[myosin heavy-chain] + ATP = O-phospho-L-threonyl-[myosin heavy-chain] + ADP + H(+). Functionally, catalyzes its autophosphorylation, which is needed for enzymatic activity and phosphorylates myosin II heavy chain at a threonine in the C-terminal tail region. This phosphorylation is critical in regulating the assembly and disassembly of myosin II filament. Participates in control of myosin localization. This chain is Myosin heavy chain kinase B (mhkB), found in Dictyostelium discoideum (Social amoeba).